The sequence spans 147 residues: Large ribosomal subunit protein bL21 (147 aa).

Residues 115–147 (KSIKVGKPTPKSSSKKEETVKKETKPKSEKSTN) are disordered. Over residues 128–147 (SKKEETVKKETKPKSEKSTN) the composition is skewed to basic and acidic residues.

Belongs to the bacterial ribosomal protein bL21 family. As to quaternary structure, part of the 50S ribosomal subunit. Contacts protein L20.

This protein binds to 23S rRNA in the presence of protein L20. This chain is Large ribosomal subunit protein bL21, found in Prochlorococcus marinus (strain MIT 9215).